We begin with the raw amino-acid sequence, 412 residues long: Phosphoglycerate kinase (412 aa).

Residues Asp-26–Asn-28, Arg-42, His-65–Arg-68, Arg-133, and Arg-166 contribute to the substrate site. Residues Lys-217, Gly-308, Glu-339, and Gly-368–Ser-371 contribute to the ATP site.

The protein belongs to the phosphoglycerate kinase family. In terms of assembly, monomer.

The protein resides in the cytoplasm. The enzyme catalyses (2R)-3-phosphoglycerate + ATP = (2R)-3-phospho-glyceroyl phosphate + ADP. Its pathway is carbohydrate degradation; glycolysis; pyruvate from D-glyceraldehyde 3-phosphate: step 2/5. This is Phosphoglycerate kinase from Synechococcus sp. (strain JA-2-3B'a(2-13)) (Cyanobacteria bacterium Yellowstone B-Prime).